A 561-amino-acid polypeptide reads, in one-letter code: ARATIQVYEETAGLMVNDPVLRTRKPLSVELGPGILGNIFDGIQRPLKTIAIKSGDVYIPRGVSVPALDKDVLWEFQPTKLGVGDVITGGDLYATVFENTLMQHHVALPPGSMGKISYIAPAGQYNLQDTVLELEFQGIKKKFTMLQTWPVRSPRPVASKLAADTPLLTGQRVLDALFPSVLGGTCAIPGAFGCGKTVISQALSKYSNSEAVVYVGCGERGNEMAEVLMDFPQLTMTLPDGREESVMKRTTLVANTSNMPVAAREASIYTGITIAEYFRDMGYNVSMMADSTSRWAEALREISGRLAEMPADSGYPAYLAARLASFYERAGKVKCLGSPDRNGSVTIVGAVSPPGGDFSDPVTSATLSIVQVFWGLDKKLAQRKHFPSVNWLISYSKYSKALESFYEKFDPDFIDIRTKAREVLQREDDLNEIVQLVGKDALAESDKITLETAKLLREDYLAQNAFTPYDKFCPFYKSVWMMRNIIHFNTLANQAVERAAGTDGHKITYSVIKHRLGDLFYRLVSQKFEDPAEGEEALVGKFKKLYDDLTTGFRNLEDEAR.

Position 190–197 (190–197 (GAFGCGKT)) interacts with ATP.

Belongs to the ATPase alpha/beta chains family. In terms of assembly, V-ATPase is a heteromultimeric enzyme composed of a peripheral catalytic V1 complex (main components: subunits A, B, C, D, E, and F) attached to an integral membrane V0 proton pore complex (main component: the proteolipid protein). High expression in the mesocotyl tip of etiolated seedlings compared to the base.

It catalyses the reaction ATP + H2O + 4 H(+)(in) = ADP + phosphate + 5 H(+)(out). Functionally, catalytic subunit of the peripheral V1 complex of vacuolar ATPase. V-ATPase vacuolar ATPase is responsible for acidifying a variety of intracellular compartments in eukaryotic cells. This Zea mays (Maize) protein is V-type proton ATPase catalytic subunit A.